The chain runs to 313 residues: Ketimine reductase mu-crystallin (313 aa).

Residue Arg47 coordinates 3,3',5-triiodo-L-thyronine. The NADPH site is built by Ser90, His91, Arg118, Ala143, Val145, Gln146, Asn167, Arg168, Thr169, Asn172, Thr204, Met205, and Val225. Glu256 is a 3,3',5-triiodo-L-thyronine binding site. Ser291 serves as a coordination point for NADPH.

Belongs to the ornithine cyclodeaminase/mu-crystallin family. As to quaternary structure, homodimer. Binds the thyroid hormone triiodothyronine (T3); T3 binding inhibits enzymatic activity.

Its subcellular location is the cytoplasm. The catalysed reaction is L-pipecolate + NADP(+) = Delta(1)-piperideine-2-carboxylate + NADPH + H(+). It catalyses the reaction L-pipecolate + NAD(+) = Delta(1)-piperideine-2-carboxylate + NADH + H(+). It carries out the reaction L-proline + NADP(+) = 1-pyrroline-2-carboxylate + NADPH + H(+). The enzyme catalyses L-proline + NAD(+) = 1-pyrroline-2-carboxylate + NADH + H(+). The catalysed reaction is (3R)-1,4-thiomorpholine-3-carboxylate + NAD(+) = 3,4-dehydrothiomorpholine-3-carboxylate + NADH + 2 H(+). It catalyses the reaction (3R)-1,4-thiomorpholine-3-carboxylate + NADP(+) = 3,4-dehydrothiomorpholine-3-carboxylate + NADPH + 2 H(+). It carries out the reaction (S)-cystathionine ketimine + NADH + 2 H(+) = (3R,5S)-2,3,5,6,7-pentahydro-1,4-thiazepine-3,5-dicarboxylate + NAD(+). The enzyme catalyses (S)-cystathionine ketimine + NADPH + 2 H(+) = (3R,5S)-2,3,5,6,7-pentahydro-1,4-thiazepine-3,5-dicarboxylate + NADP(+). The catalysed reaction is (R)-lanthionine ketimine + NADPH + 2 H(+) = (3R,5R)-1,4-thiomorpholine-3,5-dicarboxylate + NADP(+). It catalyses the reaction Delta(2)-thiazoline-2-carboxylate + NADPH + 2 H(+) = L-thiazolidine-2-carboxylate + NADP(+). In terms of biological role, catalyzes the NAD(P)H-dependent reduction of imine double bonds of a number of cyclic ketimine substrates, including sulfur-containing cyclic ketimines. Under physiological conditions, it efficiently catalyzes delta(1)-piperideine-2-carboxylate (P2C) and delta(1)-pyrroline-2-carboxylate (Pyr2C) reduction, suggesting a central role in lysine and glutamate metabolism. Additional substrates are delta(2)-thiazoline-2-carboxylate (T2C), 3,4-dehydrothiomorpholine-3-carboxylate (AECK), and (R)-lanthionine ketimine (LK) that is reduced at very low rate compared to other substrates. Also catalyzes the NAD(P)H-dependent reduction of (S)-cystathionine ketimine (CysK). In Rattus norvegicus (Rat), this protein is Ketimine reductase mu-crystallin.